We begin with the raw amino-acid sequence, 606 residues long: Arginine--tRNA ligase (606 aa).

A 'HIGH' region motif is present at residues 126-136 (PNTNKPLHLGH).

This sequence belongs to the class-I aminoacyl-tRNA synthetase family. In terms of assembly, monomer.

The protein resides in the cytoplasm. It carries out the reaction tRNA(Arg) + L-arginine + ATP = L-arginyl-tRNA(Arg) + AMP + diphosphate. This chain is Arginine--tRNA ligase, found in Phocaeicola vulgatus (strain ATCC 8482 / DSM 1447 / JCM 5826 / CCUG 4940 / NBRC 14291 / NCTC 11154) (Bacteroides vulgatus).